A 441-amino-acid polypeptide reads, in one-letter code: Ribosomal protein uS12 methylthiotransferase RimO (441 aa).

An MTTase N-terminal domain is found at 5–116 (PTIAFTHLGC…IVDVMQRVEK (112 aa)). Residues Cys-14, Cys-50, Cys-79, Cys-154, Cys-158, and Cys-161 each coordinate [4Fe-4S] cluster. The 231-residue stretch at 140–370 (TTSEGVAYVR…EVQQSISWQQ (231 aa)) folds into the Radical SAM core domain. Positions 372–438 (QKLVGQLVDV…IYDLYGCLIS (67 aa)) constitute a TRAM domain.

It belongs to the methylthiotransferase family. RimO subfamily. The cofactor is [4Fe-4S] cluster.

The protein resides in the cytoplasm. It catalyses the reaction L-aspartate(89)-[ribosomal protein uS12]-hydrogen + (sulfur carrier)-SH + AH2 + 2 S-adenosyl-L-methionine = 3-methylsulfanyl-L-aspartate(89)-[ribosomal protein uS12]-hydrogen + (sulfur carrier)-H + 5'-deoxyadenosine + L-methionine + A + S-adenosyl-L-homocysteine + 2 H(+). Its function is as follows. Catalyzes the methylthiolation of an aspartic acid residue of ribosomal protein uS12. This chain is Ribosomal protein uS12 methylthiotransferase RimO, found in Trichodesmium erythraeum (strain IMS101).